A 265-amino-acid chain; its full sequence is tRNA pseudouridine synthase A (265 aa).

The active-site Nucleophile is D52. Position 112 (Y112) interacts with substrate.

Belongs to the tRNA pseudouridine synthase TruA family. As to quaternary structure, homodimer.

The enzyme catalyses uridine(38/39/40) in tRNA = pseudouridine(38/39/40) in tRNA. In terms of biological role, formation of pseudouridine at positions 38, 39 and 40 in the anticodon stem and loop of transfer RNAs. The chain is tRNA pseudouridine synthase A from Akkermansia muciniphila (strain ATCC BAA-835 / DSM 22959 / JCM 33894 / BCRC 81048 / CCUG 64013 / CIP 107961 / Muc).